The primary structure comprises 260 residues: MILALDVGNTNITCGVFDGDRIKASFRITTKMPRTSDEYGMLLSTLLERNQVGMDDIHDAIICSVVPNIMHSLQNGLIKYFNIRPIIVEAGIKTGIRIATPNPQQIGADRIVDAVAAYELYGGPVLVIDFGTATTYDMVDENGTFMGGITAPGIRISAKALWEDAAKLPEIEIKKPDNILGKDTITSMQAGLVYGQIGQTEYIINKVKEETGMYDAKVVVTGGLGRIISNETENVDVYDPDLTLKGINLVYRKQNRKGVK.

An ATP-binding site is contributed by 6-13 (DVGNTNIT). 107–110 (GADR) contributes to the substrate binding site. Asp-109 functions as the Proton acceptor in the catalytic mechanism. Residue Asp-129 participates in K(+) binding. Thr-132 is an ATP binding site. Substrate is bound at residue Thr-184.

Belongs to the type III pantothenate kinase family. Homodimer. NH4(+) is required as a cofactor. K(+) serves as cofactor.

It localises to the cytoplasm. The catalysed reaction is (R)-pantothenate + ATP = (R)-4'-phosphopantothenate + ADP + H(+). The protein operates within cofactor biosynthesis; coenzyme A biosynthesis; CoA from (R)-pantothenate: step 1/5. Catalyzes the phosphorylation of pantothenate (Pan), the first step in CoA biosynthesis. This is Type III pantothenate kinase from Agathobacter rectalis (strain ATCC 33656 / DSM 3377 / JCM 17463 / KCTC 5835 / VPI 0990) (Eubacterium rectale).